Consider the following 524-residue polypeptide: Chromosomal replication initiator protein DnaA (524 aa).

The interval 1-85 (MSQNSSSLLE…TRVLSLRMGR (85 aa)) is domain I, interacts with DnaA modulators. Residues 85–182 (RSFSLAVSVE…TPAHNPNREV (98 aa)) are domain II. Residues 95-183 (PEQEIPETPA…PAHNPNREVS (89 aa)) form a disordered region. Pro residues predominate over residues 148–158 (APEPHPAPIAD). Positions 183–399 (SLNPKYTFES…GALIRVSAYS (217 aa)) are domain III, AAA+ region. ATP is bound by residues Gly-227, Gly-229, Lys-230, and Thr-231. A domain IV, binds dsDNA region spans residues 400-524 (SLINQPIDKE…TQLIKSRGRN (125 aa)).

It belongs to the DnaA family. As to quaternary structure, oligomerizes as a right-handed, spiral filament on DNA at oriC.

It is found in the cytoplasm. In terms of biological role, plays an essential role in the initiation and regulation of chromosomal replication. ATP-DnaA binds to the origin of replication (oriC) to initiate formation of the DNA replication initiation complex once per cell cycle. Binds the DnaA box (a 9 base pair repeat at the origin) and separates the double-stranded (ds)DNA. Forms a right-handed helical filament on oriC DNA; dsDNA binds to the exterior of the filament while single-stranded (ss)DNA is stabiized in the filament's interior. The ATP-DnaA-oriC complex binds and stabilizes one strand of the AT-rich DNA unwinding element (DUE), permitting loading of DNA polymerase. After initiation quickly degrades to an ADP-DnaA complex that is not apt for DNA replication. Binds acidic phospholipids. This chain is Chromosomal replication initiator protein DnaA, found in Corynebacterium glutamicum (strain ATCC 13032 / DSM 20300 / JCM 1318 / BCRC 11384 / CCUG 27702 / LMG 3730 / NBRC 12168 / NCIMB 10025 / NRRL B-2784 / 534).